Here is a 57-residue protein sequence, read N- to C-terminus: uncharacterized protein (57 aa).

Residues 1-57 (MDDTLPKQMTPTDTSPLKEEQAHCNNKTLENQPKNINDNKCTDSQNTDLQNTEPSKV) form a disordered region. Over residues 23 to 57 (HCNNKTLENQPKNINDNKCTDSQNTDLQNTEPSKV) the composition is skewed to polar residues.

This is an uncharacterized protein from Ornithodoros (relapsing fever ticks).